The chain runs to 377 residues: MTTRLYLSPTPPRNDREGASKSTSASIKHDAYLPPADGNRVLVDRFGRIARDLRVSLTDRCNLRCTYCMPAEGLEWLPTEQTLNDAEVLRLLHIAVVKLGIRQIRFTGGEPLLRKNLEDIIAGTAALRTDEGEKVHIALTTNGLGLDKRIAGLKEAGLDRVNISLDTIDAERYVSLTRRDRLSGVLASIDAAVAAGLHPVKINAVVMPGVNEVDIVPLAEYCISKGAQLRFIEQMPLGPREQWKRGDMVTAEEILARLEEKFTLSPAKEPRGAAPAALWNAVDKSNPVITGQIGIIASVTHPFCGDCDRSRLTTDGTIRNCLFSRTETPLRDALRDGASDDELAQLWAGAMWEKKPGHGIDDEGFLQPDRPMSAIGG.

The segment at 1–29 (MTTRLYLSPTPPRNDREGASKSTSASIKH) is disordered. A Radical SAM core domain is found at 45-271 (RFGRIARDLR…FTLSPAKEPR (227 aa)). Arg54 lines the GTP pocket. Cys61 and Cys65 together coordinate [4Fe-4S] cluster. Tyr67 contributes to the S-adenosyl-L-methionine binding site. Cys68 is a binding site for [4Fe-4S] cluster. Arg105 contacts GTP. An S-adenosyl-L-methionine-binding site is contributed by Gly109. Thr140 contributes to the GTP binding site. Residue Ser164 coordinates S-adenosyl-L-methionine. A GTP-binding site is contributed by Lys201. Met235 is a binding site for S-adenosyl-L-methionine. Residues Cys304 and Cys307 each contribute to the [4Fe-4S] cluster site. 309 to 311 (RSR) provides a ligand contact to GTP. [4Fe-4S] cluster is bound at residue Cys321.

Belongs to the radical SAM superfamily. MoaA family. In terms of assembly, monomer and homodimer. [4Fe-4S] cluster is required as a cofactor.

The enzyme catalyses GTP + AH2 + S-adenosyl-L-methionine = (8S)-3',8-cyclo-7,8-dihydroguanosine 5'-triphosphate + 5'-deoxyadenosine + L-methionine + A + H(+). Its pathway is cofactor biosynthesis; molybdopterin biosynthesis. Functionally, catalyzes the cyclization of GTP to (8S)-3',8-cyclo-7,8-dihydroguanosine 5'-triphosphate. The chain is GTP 3',8-cyclase from Corynebacterium glutamicum (strain R).